The following is a 282-amino-acid chain: AB hydrolase superfamily protein FGSG_00045 (282 aa).

Polar residues predominate over residues Met-1–Ser-10. The interval Met-1–Thr-22 is disordered. Positions Thr-22–Ile-270 constitute an AB hydrolase-1 domain.

The protein belongs to the AB hydrolase superfamily.

It functions in the pathway mycotoxin biosynthesis. Functionally, AB hydrolase superfamily protein; part of the gene cluster that mediates the biosynthesis of gramillins A and B, bicyclic lipopeptides that induce cell death in maize leaves but not in wheat leaves. The nonribosomal peptide synthetase GRA1 incorporates respectively a glutamic adic (Glu), a leucine (Leu), a serine (Ser), a hydroxyglutamine (HOGln), a 2-amino decanoic acid, and 2 cysteins (CysB and CysA). The biosynthesis of 2-amino decanoic acid incorporated in gramillins could be initiated by a fatty acid synthase composed of the alpha and beta subunits FGSG_00036 and FGSG_11656. The cytochrome P450 monooxygenase FGSG_15680 could hydroxylate the fatty acid chain. Subsequent oxidation to the ketone by the oxidoreductase FGSG_00048 and transamination by aminotransferase FGSG_00049 could form 2-amino-decanoic acid. On the other hand, FGSG_15680 could also be responsible for the HO-modified glutamine at the gamma-position. Whether hydroxylation occurs on the fully assembled product or on the Gln residue prior to assembly into the gramillins requires further proof. The thioredoxin FGSG_00043 could also be required for the disulfide-bond formation between CysA and CysB. The specific involvement of the remaining proteins from the cluster is more difficult to discern, but could have broader regulatory (FGSG_00040 and FGSG_11657) or enzymatic functions (FGSG_00044 and FGSG_00045). The final C-domain of GRA1 does not possess the expected sequence of a termination CT domain, often implicated in macrocyclization and release of a cyclopeptidein fungal NRPs; and the thioesterase FGSG_00047 may act in concert with the terminal C-domain of GRA1 to catalyze the formation of the macrocyclic anhydride and release of the products. This chain is AB hydrolase superfamily protein FGSG_00045, found in Gibberella zeae (strain ATCC MYA-4620 / CBS 123657 / FGSC 9075 / NRRL 31084 / PH-1) (Wheat head blight fungus).